Consider the following 345-residue polypeptide: Molybdopterin synthase catalytic subunit (345 aa).

Substrate contacts are provided by residues 101 to 102, K117, and 124 to 126; these read HR and KKE.

The protein belongs to the MoaE family. MOCS2B subfamily. Heterotetramer; composed of 2 small (Mocs2A) and 2 large (Mocs2B) subunits.

The protein resides in the cytoplasm. It catalyses the reaction 2 [molybdopterin-synthase sulfur-carrier protein]-C-terminal-Gly-aminoethanethioate + cyclic pyranopterin phosphate + H2O = molybdopterin + 2 [molybdopterin-synthase sulfur-carrier protein]-C-terminal Gly-Gly + 2 H(+). The protein operates within cofactor biosynthesis; molybdopterin biosynthesis. Functionally, catalytic subunit of the molybdopterin synthase complex, a complex that catalyzes the conversion of precursor Z into molybdopterin. Acts by mediating the incorporation of 2 sulfur atoms from thiocarboxylated Mocs2A into precursor Z to generate a dithiolene group. In Drosophila virilis (Fruit fly), this protein is Molybdopterin synthase catalytic subunit.